The primary structure comprises 262 residues: Hydroxyethylthiazole kinase (262 aa).

Position 50 (methionine 50) interacts with substrate. Residues arginine 125 and threonine 171 each contribute to the ATP site. Glycine 198 contributes to the substrate binding site.

The protein belongs to the Thz kinase family. The cofactor is Mg(2+).

It carries out the reaction 5-(2-hydroxyethyl)-4-methylthiazole + ATP = 4-methyl-5-(2-phosphooxyethyl)-thiazole + ADP + H(+). It functions in the pathway cofactor biosynthesis; thiamine diphosphate biosynthesis; 4-methyl-5-(2-phosphoethyl)-thiazole from 5-(2-hydroxyethyl)-4-methylthiazole: step 1/1. In terms of biological role, catalyzes the phosphorylation of the hydroxyl group of 4-methyl-5-beta-hydroxyethylthiazole (THZ). This chain is Hydroxyethylthiazole kinase, found in Escherichia coli (strain SMS-3-5 / SECEC).